A 618-amino-acid polypeptide reads, in one-letter code: 1-aminocyclopropane-1-carboxylate synthase-like protein 1 (618 aa).

The segment covering Gln11–Thr26 has biased composition (low complexity). The tract at residues Gln11 to Pro54 is disordered. Residues Met27–Ala45 show a composition bias toward polar residues. Residue Glu122 participates in substrate binding. Lys340 carries the N6-(pyridoxal phosphate)lysine modification.

Belongs to the class-I pyridoxal-phosphate-dependent aminotransferase family.

This chain is 1-aminocyclopropane-1-carboxylate synthase-like protein 1 (accs), found in Takifugu rubripes (Japanese pufferfish).